The chain runs to 798 residues: Integrin beta-1 (798 aa).

A signal peptide spans 1–20; that stretch reads MNLQPIFWIGLISSICCVFA. The PSI domain maps to 26 to 76; that stretch reads RCLKANAKSCGECIQAGPNCGWCTNSTFLQEGMPTSARCDDLEALKKKGCP. Disulfide bonds link Cys27-Cys45, Cys35-Cys464, Cys38-Cys64, Cys48-Cys75, Cys207-Cys213, Cys261-Cys301, Cys401-Cys415, Cys435-Cys462, Cys466-Cys486, Cys477-Cys489, Cys491-Cys500, Cys502-Cys533, Cys516-Cys531, Cys525-Cys536, Cys538-Cys553, Cys555-Cys576, Cys560-Cys574, Cys568-Cys579, Cys581-Cys590, Cys592-Cys615, Cys599-Cys613, Cys607-Cys618, Cys620-Cys630, Cys633-Cys636, Cys640-Cys691, Cys646-Cys665, Cys649-Cys661, and Cys699-Cys723. N-linked (GlcNAc...) asparagine glycosylation occurs at Asn50. The tract at residues 75–107 is disordered; it reads CPPDDIENPRGSKDIKKNKNVTNRSKGTAEKLK. Residues 81–91 show a composition bias toward basic and acidic residues; it reads ENPRGSKDIKK. N-linked (GlcNAc...) asparagine glycans are attached at residues Asn94 and Asn97. A VWFA domain is found at 140–378; the sequence is DYPIDLYYLM…QLIIDAYNSL (239 aa). 2 residues coordinate Mg(2+): Ser152 and Ser154. Ca(2+) is bound by residues Ser154, Asp157, Asp158, and Glu189. A CX3CL1-binding region spans residues 207-213; the sequence is CTSEQNC. Residue Asn212 is glycosylated (N-linked (GlcNAc...) asparagine). Ca(2+)-binding residues include Asn244, Asp246, Pro248, and Glu249. Glu249 provides a ligand contact to Mg(2+). Asn269 carries N-linked (GlcNAc...) asparagine glycosylation. The segment at 295–314 is CX3CL1-binding; sequence LPNDGQCHLENNMYTMSHYY. Residue Ala362 participates in Ca(2+) binding. Asn363, Asn406, and Asn417 each carry an N-linked (GlcNAc...) asparagine glycan. The interaction with TMEM182 stretch occupies residues 383–465; it reads ILENSKLSEG…VILQYICECE (83 aa). I-EGF domains follow at residues 466 to 501, 502 to 554, 555 to 591, and 592 to 631; these read CQSE…RHCE, CSTD…KFCE, CDNF…SACD, and CSLD…QTCE. Asn481 carries an N-linked (GlcNAc...) asparagine glycan. N-linked (GlcNAc...) asparagine glycosylation occurs at Asn520. Asn584 carries N-linked (GlcNAc...) asparagine glycosylation. Residue Asn669 is glycosylated (N-linked (GlcNAc...) asparagine). Residues 729–749 traverse the membrane as a helical segment; the sequence is IIPIVAGVVAGIVLIGLALLL. Residues 762-767 form a signal for sorting from recycling endosomes; interaction with ACAP1 region; the sequence is EFAKFE. Thr777 is subject to Phosphothreonine. Phosphotyrosine is present on Tyr783. At Ser785 the chain carries Phosphoserine. Residues 785 to 792 are interaction with ITGB1BP1; sequence SAVTTVVN. Thr789 carries the phosphothreonine modification. Position 794 is an N6-acetyllysine; alternate (Lys794). Lys794 is covalently cross-linked (Glycyl lysine isopeptide (Lys-Gly) (interchain with G-Cter in SUMO1); alternate).

It belongs to the integrin beta chain family. As to quaternary structure, interacts with seprase FAP (seprase); the interaction occurs at the cell surface of invadopodia membrane in a collagen-dependent manner. Heterodimer of an alpha and a beta subunit. Beta-1 associates with either alpha-1, alpha-2, alpha-3, alpha-4, alpha-5, alpha-6, alpha-7, alpha-8, alpha-9, alpha-10, alpha-11 or alpha-V. ITGA6:ITGB1 is found in a complex with CD9; interaction takes place in oocytes and is involved in sperm-egg fusion. Binds LGALS3BP and NMRK2, when associated with alpha-7, but not with alpha-5. Interacts with FLNA, FLNB, FLNC and RANBP9. Interacts with KRT1 in the presence of RACK1 and SRC. Interacts with JAML; integrin alpha-4/beta-1 may regulate leukocyte to endothelial cells adhesion by controlling JAML homodimerization. Interacts with RAB21. Interacts (via the cytoplasmic region) with RAB25 (via the hypervariable C-terminal region). Interacts with MYO10. Interacts with ITGB1BP1 (via C-terminal region); the interaction is a prerequisite for focal adhesion disassembly. Interacts with TLN1; the interaction is prevented by competitive binding of ITGB1BP1. Interacts with ACAP1; required for ITGB1 recycling. Interacts with ASAP3. Interacts with FERMT2; the interaction is inhibited in presence of ITGB1BP1. Interacts with DAB2. Interacts with FGR and HCK. Interacts with alpha-7A and alpha-7B in adult skeletal muscle. Interacts with alpha-7B in cardiomyocytes of adult heart. Interacts with EMP2; the interaction may be direct or indirect and ITGB1 has a heterodimer form. ITGA5:ITGB1 interacts with CCN3. ITGA4:ITGB1 is found in a ternary complex with CX3CR1 and CX3CL1. ITGA5:ITGB1 interacts with FBN1. ITGA5:ITGB1 acts as a receptor for fibronectin FN1 and mediates R-G-D-dependent cell adhesion to FN1. ITGA5:ITGB1 interacts with IL1B. Interacts with MDK. ITGA4:ITGB1 interacts with MDK; this interaction mediates MDK-induced osteoblast cells migration through PXN phosphorylation. ITGA6:ITGB1 interacts with MDK; this interaction mediates MDK-induced neurite-outgrowth. ITGA5:ITGB1 interacts with ACE2. Interacts with TMEM182 and LAMB1. Interacts with tensin TNS3; TNS3 also interacts with PEAK1, thus acting as an adapter molecule to bridge the association of PEAK1 with ITGB1. Interacts with tensin TNS4; the interaction displaces tensin TNS3 from the ITGB1 cytoplasmic tail and promotes ITGB1 stability. Integrin ITGA9:ITGB1 interacts with SPP1/OPN (via N-terminus). Integrin ITGA9:ITGB1 interacts with TNC/TNFN3 (via the 3rd Fibronectin type-III domain). Integrins ITGA4:ITGB1 and ITGA9:ITGB1 interact with SVEP1 (via Sushi domain 21); thereby inhibit Ca(2+) intracellular signaling and as a result repress vasocontraction. ITGA4:ITGB1 and ITGA5:ITGB1 interacts with SELP. Interacts with CD248. ITGA5:ITGB1 interacts with IGFBP1. ITGA4:ITGB1 interacts with BCAM. Interacts with ADGRG6.

It is found in the cell membrane. It localises to the cell projection. Its subcellular location is the invadopodium membrane. The protein localises to the ruffle membrane. The protein resides in the recycling endosome. It is found in the melanosome. It localises to the lamellipodium. Its subcellular location is the ruffle. The protein localises to the cell junction. The protein resides in the focal adhesion. Integrins alpha-1/beta-1, alpha-2/beta-1, alpha-10/beta-1 and alpha-11/beta-1 are receptors for collagen. Integrins alpha-1/beta-1 and alpha-2/beta-2 recognize the proline-hydroxylated sequence G-F-P-G-E-R in collagen. Integrins alpha-2/beta-1, alpha-3/beta-1, alpha-4/beta-1, alpha-5/beta-1, alpha-8/beta-1, alpha-10/beta-1, alpha-11/beta-1 and alpha-V/beta-1 are receptors for fibronectin. Alpha-4/beta-1 recognizes one or more domains within the alternatively spliced CS-1 and CS-5 regions of fibronectin. Integrin alpha-5/beta-1 is a receptor for fibrinogen. Integrin alpha-1/beta-1, alpha-2/beta-1, alpha-6/beta-1 and alpha-7/beta-1 are receptors for lamimin. Integrin alpha-6/beta-1 (ITGA6:ITGB1) is present in oocytes and is involved in sperm-egg fusion. Integrin alpha-4/beta-1 is a receptor for VCAM1 and recognizes the sequence Q-I-D-S in VCAM1. Integrin alpha-9/beta-1 is a receptor for VCAM1, cytotactin and osteopontin. It recognizes the sequence A-E-I-D-G-I-E-L in cytotactin. Integrin alpha-3/beta-1 is a receptor for epiligrin, thrombospondin and CSPG4. Integrin alpha-3/beta-1 provides a docking site for FAP (seprase) at invadopodia plasma membranes in a collagen-dependent manner and hence may participate in the adhesion, formation of invadopodia and matrix degradation processes, promoting cell invasion. Alpha-3/beta-1 may mediate with LGALS3 the stimulation by CSPG4 of endothelial cells migration. Integrin alpha-V/beta-1 is a receptor for vitronectin. Beta-1 integrins recognize the sequence R-G-D in a wide array of ligands. When associated with alpha-7/beta-1 integrin, regulates cell adhesion and laminin matrix deposition. Involved in promoting endothelial cell motility and angiogenesis. Involved in osteoblast compaction through the fibronectin fibrillogenesis cell-mediated matrix assembly process and the formation of mineralized bone nodules. May be involved in up-regulation of the activity of kinases such as PKC via binding to KRT1. Together with KRT1 and RACK1, serves as a platform for SRC activation or inactivation. Plays a mechanistic adhesive role during telophase, required for the successful completion of cytokinesis. ITGA4:ITGB1 binds to fractalkine (CX3CL1) and may act as its coreceptor in CX3CR1-dependent fractalkine signaling. ITGA4:ITGB1 and ITGA5:ITGB1 bind to PLA2G2A via a site (site 2) which is distinct from the classical ligand-binding site (site 1) and this induces integrin conformational changes and enhanced ligand binding to site 1. ITGA5:ITGB1 acts as a receptor for fibrillin-1 (FBN1) and mediates R-G-D-dependent cell adhesion to FBN1. ITGA5:ITGB1 is a receptor for IL1B and binding is essential for IL1B signaling. ITGA5:ITGB3 is a receptor for soluble CD40LG and is required for CD40/CD40LG signaling. Plays an important role in myoblast differentiation and fusion during skeletal myogenesis. ITGA9:ITGB1 may play a crucial role in SVEP1/polydom-mediated myoblast cell adhesion. Integrins ITGA9:ITGB1 and ITGA4:ITGB1 repress PRKCA-mediated L-type voltage-gated channel Ca(2+) influx and ROCK-mediated calcium sensitivity in vascular smooth muscle cells via their interaction with SVEP1, thereby inhibit vasocontraction. This Pongo abelii (Sumatran orangutan) protein is Integrin beta-1 (ITGB1).